A 117-amino-acid polypeptide reads, in one-letter code: MAAAAAAGSGTPREEEGPAGEAAASQPQAPTSVPGARLSRLPLARVKALVKADPDVTLAGQEAIFILARAAELFVETIAKDAYCCAQQGKRKTLQRRDLDNAIEAVDEFAFLEGTLD.

A disordered region spans residues 1-36; that stretch reads MAAAAAAGSGTPREEEGPAGEAAASQPQAPTSVPGA. Residue A2 is modified to N-acetylalanine. Position 11 is a phosphothreonine (T11). Residues 19-30 show a composition bias toward low complexity; sequence AGEAAASQPQAP. A Phosphoserine modification is found at S25.

In terms of assembly, component of the DNA polymerase epsilon complex consisting of four subunits: the catalytic subunit POLE and the accessory subunits POLE2, POLE3 and POLE4. Interaction with POLE3 is a prerequisite for further binding with POLE and POLE2.

The protein localises to the nucleus. Functionally, accessory component of the DNA polymerase epsilon complex. Participates in DNA repair and in chromosomal DNA replication. The sequence is that of DNA polymerase epsilon subunit 4 (POLE4) from Homo sapiens (Human).